The primary structure comprises 169 residues: Cilia- and flagella-associated protein 276 (169 aa).

Disordered stretches follow at residues 26-45 and 150-169; these read SKKLPYKNPTHLAQQQEPWS and HTAATNGGYSRKKDGGFFST. Positions 36-45 are enriched in polar residues; sequence HLAQQQEPWS. The span at 160 to 169 shows a compositional bias: basic and acidic residues; that stretch reads RKKDGGFFST.

Microtubule inner protein component of sperm flagellar doublet microtubules. In terms of tissue distribution, expressed in cerebrum, cerebellum, gastrocnemius muscle, spinal cord and lung tissues.

It localises to the cytoplasm. Its subcellular location is the cytoskeleton. The protein localises to the flagellum axoneme. It is found in the cilium axoneme. Functionally, microtubule inner protein (MIP) part of the dynein-decorated doublet microtubules (DMTs) in cilia axoneme, which is required for motile cilia beating. May play an important role for the maintenance of myelin-axon integrity. May affect intracellular Ca(2+) homeostasis. The polypeptide is Cilia- and flagella-associated protein 276 (Homo sapiens (Human)).